Consider the following 398-residue polypeptide: Probable peptidoglycan glycosyltransferase FtsW (398 aa).

At 1–20 the chain is on the cytoplasmic side; it reads MSTQAIRGARGLVLKWGAGR. A helical membrane pass occupies residues 21-41; the sequence is FYLDTVLLSVSLGLMLFGFVM. Residues 42–57 lie on the Periplasmic side of the membrane; sequence VSSASLHLGEKMASDS. The helical transmembrane segment at 58-78 threads the bilayer; that stretch reads FYFPKHQLVHILLGLAAGWGA. Topologically, residues 79-92 are cytoplasmic; that stretch reads ARVRLDTLERHSRS. Residues 93–113 form a helical membrane-spanning segment; sequence LFWAGIALLVLVLIPGVGKSV. Residues 114–121 lie on the Periplasmic side of the membrane; it reads NGSVRWIN. The chain crosses the membrane as a helical span at residues 122–142; that stretch reads LFGLRVQVSEVFKLVAAIYVA. Over 143–153 the chain is Cytoplasmic; that stretch reads GYISRHLDTVR. The helical transmembrane segment at 154 to 174 threads the bilayer; it reads TSVKGMIFPLSLLAIGAVLLL. The Periplasmic segment spans residues 175–177; the sequence is KEP. Residues 178–198 form a helical membrane-spanning segment; that stretch reads DFGATAVVMATALGMLFLAGA. Arg-199 is a topological domain (cytoplasmic). Residues 200–220 form a helical membrane-spanning segment; that stretch reads LWVFVGLLGLVAVAGTVLIYT. Residues 221 to 289 lie on the Periplasmic side of the membrane; the sequence is AEYRLRRVLS…LFSVIGEELG (69 aa). Residues 290–310 form a helical membrane-spanning segment; the sequence is LWGATTVILLFAIVVWRALAI. At 311–318 the chain is on the cytoplasmic side; sequence GRLAERSG. A helical transmembrane segment spans residues 319–339; it reads NLFAAFLAYGIGIWLGLQSFI. Over 340–355 the chain is Periplasmic; that stretch reads NMGVNMGMLPTKGLTL. Residues 356 to 376 traverse the membrane as a helical segment; that stretch reads PLMSYGGGSMMVVCAAIGLLF. Over 377 to 398 the chain is Cytoplasmic; the sequence is RIRSEAVASFLGNGRKGLWPGV.

Belongs to the SEDS family. FtsW subfamily.

The protein localises to the cell inner membrane. It carries out the reaction [GlcNAc-(1-&gt;4)-Mur2Ac(oyl-L-Ala-gamma-D-Glu-L-Lys-D-Ala-D-Ala)](n)-di-trans,octa-cis-undecaprenyl diphosphate + beta-D-GlcNAc-(1-&gt;4)-Mur2Ac(oyl-L-Ala-gamma-D-Glu-L-Lys-D-Ala-D-Ala)-di-trans,octa-cis-undecaprenyl diphosphate = [GlcNAc-(1-&gt;4)-Mur2Ac(oyl-L-Ala-gamma-D-Glu-L-Lys-D-Ala-D-Ala)](n+1)-di-trans,octa-cis-undecaprenyl diphosphate + di-trans,octa-cis-undecaprenyl diphosphate + H(+). The protein operates within cell wall biogenesis; peptidoglycan biosynthesis. Functionally, peptidoglycan polymerase that is essential for cell division. In Methylococcus capsulatus (strain ATCC 33009 / NCIMB 11132 / Bath), this protein is Probable peptidoglycan glycosyltransferase FtsW.